The following is a 206-amino-acid chain: Adenylate kinase (206 aa).

10-15 (GAGKGT) provides a ligand contact to ATP. The NMP stretch occupies residues 30 to 59 (STGDILREAVQKGTPLGKKAKEYMERGELV). AMP is bound by residues Thr-31, 57–59 (ELV), 82–85 (GFPR), and Gln-89. ATP-binding positions include Arg-120, Arg-124, and 133-134 (VY). Residues 123–153 (GRRINPETGEVYHVKYNPPPPGVKVIQREDD) form an LID region. AMP is bound at residue Arg-161. Lys-189 is an ATP binding site.

The protein belongs to the adenylate kinase family. As to quaternary structure, monomer.

It is found in the cytoplasm. It catalyses the reaction AMP + ATP = 2 ADP. Its pathway is purine metabolism; AMP biosynthesis via salvage pathway; AMP from ADP: step 1/1. Functionally, catalyzes the reversible transfer of the terminal phosphate group between ATP and AMP. Plays an important role in cellular energy homeostasis and in adenine nucleotide metabolism. This chain is Adenylate kinase, found in Aquifex aeolicus (strain VF5).